We begin with the raw amino-acid sequence, 33 residues long: Photosystem II reaction center protein Psb30 (33 aa).

A helical transmembrane segment spans residues 5-25 (LIAQLTFLTSIIVSGPLVIAL).

The protein belongs to the Psb30/Ycf12 family. As to quaternary structure, PSII is composed of 1 copy each of membrane proteins PsbA, PsbB, PsbC, PsbD, PsbE, PsbF, PsbH, PsbI, PsbJ, PsbK, PsbL, PsbM, PsbT, PsbX, PsbY, PsbZ, Psb30/Ycf12, peripheral proteins of the oxygen-evolving complex and a large number of cofactors. It forms dimeric complexes.

Its subcellular location is the plastid. The protein resides in the chloroplast thylakoid membrane. In terms of biological role, a core subunit of photosystem II (PSII), probably helps stabilize the reaction center. This Psilotum nudum (Whisk fern) protein is Photosystem II reaction center protein Psb30.